We begin with the raw amino-acid sequence, 439 residues long: Xylose isomerase (439 aa).

Residues His101 and Asp104 contribute to the active site. Mg(2+) contacts are provided by Glu232, Glu268, His271, Asp296, Asp307, Asp309, and Asp339.

Belongs to the xylose isomerase family. Homotetramer. The cofactor is Mg(2+).

Its subcellular location is the cytoplasm. The enzyme catalyses alpha-D-xylose = alpha-D-xylulofuranose. The protein is Xylose isomerase of Yersinia pestis bv. Antiqua (strain Angola).